The sequence spans 154 residues: Large ribosomal subunit protein uL22 (154 aa).

Belongs to the universal ribosomal protein uL22 family. As to quaternary structure, part of the 50S ribosomal subunit.

In terms of biological role, this protein binds specifically to 23S rRNA. It makes multiple contacts with different domains of the 23S rRNA in the assembled 50S subunit and ribosome. The globular domain of the protein is located near the polypeptide exit tunnel on the outside of the subunit, while an extended beta-hairpin is found that lines the wall of the exit tunnel in the center of the 70S ribosome. This is Large ribosomal subunit protein uL22 from Methanoregula boonei (strain DSM 21154 / JCM 14090 / 6A8).